The primary structure comprises 160 residues: Cytochrome b6-f complex subunit 4 (160 aa).

3 helical membrane-spanning segments follow: residues Leu-36–Val-56, Leu-95–Glu-115, and Leu-131–Ile-151.

This sequence belongs to the cytochrome b family. PetD subfamily. In terms of assembly, the 4 large subunits of the cytochrome b6-f complex are cytochrome b6, subunit IV (17 kDa polypeptide, petD), cytochrome f and the Rieske protein, while the 4 small subunits are petG, petL, petM and petN. The complex functions as a dimer.

It is found in the plastid. The protein resides in the chloroplast thylakoid membrane. Component of the cytochrome b6-f complex, which mediates electron transfer between photosystem II (PSII) and photosystem I (PSI), cyclic electron flow around PSI, and state transitions. The chain is Cytochrome b6-f complex subunit 4 from Phaeodactylum tricornutum (strain CCAP 1055/1).